A 926-amino-acid chain; its full sequence is Storkhead-box protein 2 (926 aa).

7 disordered regions span residues 1 to 32, 338 to 391, 452 to 529, 564 to 588, 632 to 672, 724 to 803, and 825 to 926; these read MKKTRSTTLRRAWPSSDFSDRASDRMRSRSEK, EEEK…HLDI, EMPF…SYID, KEPSSACSLLEPGKPPESLPSYGEL, GVKK…GGVA, LKSH…GTMQ, and LAPK…VTSV. Positions 18–32 are enriched in basic and acidic residues; the sequence is FSDRASDRMRSRSEK. Residues 353-378 are compositionally biased toward basic residues; it reads HSGRSKKSRTHRKSHGKSRSHSKTRV. The segment covering 379–391 has biased composition (basic and acidic residues); it reads SKGDPSDGSHLDI. Positions 463 to 472 are enriched in basic residues; that stretch reads SHSKVHRSHS. Over residues 473–495 the composition is skewed to basic and acidic residues; the sequence is HTQDRRSRNERSNKAKERSRSMD. The segment covering 518–529 has biased composition (polar residues); sequence QDDQTPSQSYID. Basic and acidic residues predominate over residues 632–658; sequence GVKKLSPSDRQVPHSSREPVGHKEESP. Polar residues predominate over residues 746–769; the sequence is LGTSAAQAMPASQRQQESGGNQEA. Over residues 785–799 the composition is skewed to basic and acidic residues; that stretch reads GANKNTEEEKNREDV. Composition is skewed to polar residues over residues 847-884 and 914-926; these read MDSSSITVDSGFNSPRTRESLASNTSSIVESNRRQNPA and KPSNCLQASVTSV.

This chain is Storkhead-box protein 2 (STOX2), found in Homo sapiens (Human).